The primary structure comprises 107 residues: Integration host factor subunit beta (107 aa).

A disordered region spans residues 56–107 (RPARVGRNPKSGEKVQVPEKFVPHFKPGKELRERVDGRAGEPLKADDPDDER). The segment covering 82 to 101 (PGKELRERVDGRAGEPLKAD) has biased composition (basic and acidic residues).

It belongs to the bacterial histone-like protein family. As to quaternary structure, heterodimer of an alpha and a beta chain.

This protein is one of the two subunits of integration host factor, a specific DNA-binding protein that functions in genetic recombination as well as in transcriptional and translational control. This is Integration host factor subunit beta from Burkholderia vietnamiensis (strain G4 / LMG 22486) (Burkholderia cepacia (strain R1808)).